The sequence spans 359 residues: Outer membrane protein P5 (359 aa).

A signal peptide spans 1–21 (MKKTAIALVVAGLAAASVAQA). The next 8 membrane-spanning stretches (beta stranded) occupy residues 27–37 (TFYAGVKAGQG), 64–75 (TFTYGVFGGYQI), 83–91 (LAAELGYDD), 110–121 (HGAYLSLKGSYE), 126–134 (LDVYGKAGV), 164–173 (GLFAVGAEYA), 178–185 (LAVRLEYQ), and 211–219 (CINAGISYR). Residues 233–359 (MVSKTFSLNS…RVEIAVNGTK (127 aa)) form the OmpA-like domain. The cysteines at positions 332 and 344 are disulfide-linked.

It belongs to the outer membrane OOP (TC 1.B.6) superfamily. OmpA family. In terms of assembly, monomer and homodimer.

It is found in the cell outer membrane. It localises to the fimbrium. Acts as a fimbriae subunit, allowing adhesion to host cells. Its function is as follows. With TolR probably plays a role in maintaining the position of the peptidoglycan cell wall in the periplasm. Acts as a porin with low permeability that allows slow penetration of small solutes; an internal gate slows down solute passage. The polypeptide is Outer membrane protein P5 (Haemophilus influenzae).